The chain runs to 58 residues: NADH dehydrogenase [ubiquinone] 1 beta subcomplex subunit 1 (58 aa).

The chain crosses the membrane as a helical span at residues His11 to Leu27.

The protein belongs to the complex I NDUFB1 subunit family. Complex I is composed of 45 different subunits.

It localises to the mitochondrion inner membrane. Its function is as follows. Accessory subunit of the mitochondrial membrane respiratory chain NADH dehydrogenase (Complex I) that is believed not to be involved in catalysis. Complex I functions in the transfer of electrons from NADH to the respiratory chain. The immediate electron acceptor for the enzyme is believed to be ubiquinone. The sequence is that of NADH dehydrogenase [ubiquinone] 1 beta subcomplex subunit 1 (NDUFB1) from Homo sapiens (Human).